The following is a 137-amino-acid chain: Large-conductance mechanosensitive channel (137 aa).

2 helical membrane passes run 9–29 (AFAV…GAAF) and 79–99 (IQTV…VKAI).

Belongs to the MscL family. Homopentamer.

The protein resides in the cell inner membrane. In terms of biological role, channel that opens in response to stretch forces in the membrane lipid bilayer. May participate in the regulation of osmotic pressure changes within the cell. This Pseudomonas aeruginosa (strain ATCC 15692 / DSM 22644 / CIP 104116 / JCM 14847 / LMG 12228 / 1C / PRS 101 / PAO1) protein is Large-conductance mechanosensitive channel.